The following is a 226-amino-acid chain: Ribosomal RNA small subunit methyltransferase G (226 aa).

S-adenosyl-L-methionine is bound by residues G83, F88, 136 to 137, and R152; that span reads IE. A disordered region spans residues 199–226; that stretch reads FSPSQSDPEGSVLKVRGLHGPDGQPHRR.

Belongs to the methyltransferase superfamily. RNA methyltransferase RsmG family.

It is found in the cytoplasm. The enzyme catalyses guanosine(527) in 16S rRNA + S-adenosyl-L-methionine = N(7)-methylguanosine(527) in 16S rRNA + S-adenosyl-L-homocysteine. Functionally, specifically methylates the N7 position of guanine in position 527 of 16S rRNA. The chain is Ribosomal RNA small subunit methyltransferase G from Parvibaculum lavamentivorans (strain DS-1 / DSM 13023 / NCIMB 13966).